Reading from the N-terminus, the 774-residue chain is ANTKNREPKVSSVFLCFSIFYVTVLLNCNHVYGQTSTVFACDVAKNTNVSSYGFCDNSLSVEDRVSDLVKRLTLQEKIGNLGNSAVEVSRLGIPKYEWWSEALHGVSNIGPGTHFSSLVPGATNFPMPILTAASFNTSLFQAIGSVVSNEARAMYNVGLAGLTYWSPNINIFRDPRWGRGQETPGEDPLLSSKYAAGYVKGLQQTDDGDSDKLKVAACCKHYTAYDVDNWKGVQRYTFDAVVSQQDLDDTFQPPFKSCVIDGNVASVMCSYNKVNGKPTCADPDLLKGVIRGKWKLNGYIVSDCDSVEVLYKDQHYTKTPEEAAAKTILSGLDLDCGSYLGQYTGGAVKQGLVDEASITNAVSNNFATLMRLGFFDGDPSKQPYGNLGPKDVCTPENQELAREAARQGIVLLKNSPRSLPLSSKAIKSLAVIGPNANATRVMIGNYEGIPCKYTSPLQGLTAFVPTSYAPGCPDVQCANAQIDDAAKIAASADATIIVVGANLAIEAESLDRVNILLPGQQQQLVNEVANVSKGPVILVIMSGGGMDVSFAKTNDKITSILWVGYPGEAGGAAIADVIFGSYNPSGRLPMTWYPQSYVEKVPMTNMNMRADPATGYPGRTYRFYKGETVFSFGDGMSFGTVEHKIVKAPQLVSVPLAEDHECRSLECKSLDVADKHCQNLAFDIHLSVKNMGKMSSSHSVLLFFTPPNVHNAPQKHLLGFEKVQLAGKSEGMVRFKVDVCNDLSVVDELGNRKVPLGDHMLHVGNLKHSLSVRI.

The first 33 residues, 1–33 (ANTKNREPKVSSVFLCFSIFYVTVLLNCNHVYG), serve as a signal peptide directing secretion. 2 N-linked (GlcNAc...) asparagine glycosylation sites follow: Asn-48 and Asn-136. Asp-303 is an active-site residue. N-linked (GlcNAc...) asparagine glycosylation is found at Asn-437 and Asn-530.

This sequence belongs to the glycoside hydrolase 3 family. Post-translationally, proteolytically cleaved in roots to form a 65 kDa protein.

It localises to the secreted. The protein resides in the extracellular space. It is found in the extracellular matrix. It carries out the reaction Hydrolysis of (1-&gt;4)-beta-D-xylans, to remove successive D-xylose residues from the non-reducing termini.. The enzyme catalyses Hydrolysis of terminal non-reducing alpha-L-arabinofuranoside residues in alpha-L-arabinosides.. Functionally, a bifunctional beta-xylosidase/alpha-L-arabinosidase, exo-enzyme that acts synergistically with endohydrolases. Releases xylose and arabinose from cell walls. Does not cleave xylan from oat spelts although xylan from oat spelts was degraded to xylose when this enzyme was used in combination with xylanase. Also releases xylose and arabinose from aryl glycosides, xylo-oligosaccharides, arabinan from sugar beet and arabino-oligosaccharides, arabinan from sugar beet and arabinoxylan from wheat. This is Beta-xylosidase/alpha-L-arabinofuranosidase 1 from Medicago sativa subsp. varia (Alfalfa).